Consider the following 372-residue polypeptide: Probable dual-specificity RNA methyltransferase RlmN (372 aa).

Catalysis depends on E106, which acts as the Proton acceptor. The Radical SAM core domain occupies 112 to 359; sequence YPQRNTVCIS…SCTVRDTRGR (248 aa). Cysteines 119 and 365 form a disulfide. Positions 126, 130, and 133 each coordinate [4Fe-4S] cluster. S-adenosyl-L-methionine contacts are provided by residues 186 to 187, S220, 243 to 245, and N322; these read GE and SLH. The active-site S-methylcysteine intermediate is the C365.

This sequence belongs to the radical SAM superfamily. RlmN family. [4Fe-4S] cluster serves as cofactor.

Its subcellular location is the cytoplasm. It catalyses the reaction adenosine(2503) in 23S rRNA + 2 reduced [2Fe-2S]-[ferredoxin] + 2 S-adenosyl-L-methionine = 2-methyladenosine(2503) in 23S rRNA + 5'-deoxyadenosine + L-methionine + 2 oxidized [2Fe-2S]-[ferredoxin] + S-adenosyl-L-homocysteine. The enzyme catalyses adenosine(37) in tRNA + 2 reduced [2Fe-2S]-[ferredoxin] + 2 S-adenosyl-L-methionine = 2-methyladenosine(37) in tRNA + 5'-deoxyadenosine + L-methionine + 2 oxidized [2Fe-2S]-[ferredoxin] + S-adenosyl-L-homocysteine. Specifically methylates position 2 of adenine 2503 in 23S rRNA and position 2 of adenine 37 in tRNAs. The polypeptide is Probable dual-specificity RNA methyltransferase RlmN (Mycolicibacterium smegmatis (strain ATCC 700084 / mc(2)155) (Mycobacterium smegmatis)).